Reading from the N-terminus, the 203-residue chain is ATP-dependent Clp protease proteolytic subunit (203 aa).

The active-site Nucleophile is Ser-107. Residue His-132 is part of the active site.

It belongs to the peptidase S14 family. Fourteen ClpP subunits assemble into 2 heptameric rings which stack back to back to give a disk-like structure with a central cavity, resembling the structure of eukaryotic proteasomes.

It localises to the cytoplasm. It carries out the reaction Hydrolysis of proteins to small peptides in the presence of ATP and magnesium. alpha-casein is the usual test substrate. In the absence of ATP, only oligopeptides shorter than five residues are hydrolyzed (such as succinyl-Leu-Tyr-|-NHMec, and Leu-Tyr-Leu-|-Tyr-Trp, in which cleavage of the -Tyr-|-Leu- and -Tyr-|-Trp bonds also occurs).. Cleaves peptides in various proteins in a process that requires ATP hydrolysis. Has a chymotrypsin-like activity. Plays a major role in the degradation of misfolded proteins. In Thermotoga maritima (strain ATCC 43589 / DSM 3109 / JCM 10099 / NBRC 100826 / MSB8), this protein is ATP-dependent Clp protease proteolytic subunit.